The following is a 171-amino-acid chain: Disulfide bond formation protein B (171 aa).

Residues 1–13 (MTFISNLADTRLA) lie on the Cytoplasmic side of the membrane. A helical membrane pass occupies residues 14 to 30 (WGLLFLSALVLVAYALF). Residues 31-48 (SQHAMGLQPCIMCIYQRT) lie on the Periplasmic side of the membrane. The cysteines at positions 40 and 43 are disulfide-linked. Residues 49–63 (AIFGIMFACVPVLAA) form a helical membrane-spanning segment. At 64–70 (NNMLTRL) the chain is on the cytoplasmic side. A helical membrane pass occupies residues 71-88 (FAFTVWGISAIWGGLIAW). The Periplasmic portion of the chain corresponds to 89–144 (EHYDIQNAANPFFATCEIVPNFPSWLPLHEWLPNLFAATGDCGNIDWVFMDMSMPQ). The cysteines at positions 104 and 130 are disulfide-linked. A helical transmembrane segment spans residues 145-163 (WMMVVFAIYSSIWFVVLAS). The Cytoplasmic portion of the chain corresponds to 164-171 (RLIGNRAI).

It belongs to the DsbB family.

It localises to the cell inner membrane. In terms of biological role, required for disulfide bond formation in some periplasmic proteins. Acts by oxidizing the DsbA protein. In Pseudoalteromonas atlantica (strain T6c / ATCC BAA-1087), this protein is Disulfide bond formation protein B.